The following is a 101-amino-acid chain: DET1- and DDB1-associated protein 1 (101 aa).

Residues 67 to 101 (NAAKKRDQDQLEIGETSAPPRKIARTDSQEMSEDT) are disordered.

This sequence belongs to the DDA1 family. In terms of assembly, component of numerous DCX (DDB1-CUL4-X-box) E3 ubiquitin-protein ligase complexes which consist of a core of DDB1, cullin-4 (CUL4A or CUL4B), DDA1 and RBX1.

It participates in protein modification; protein ubiquitination. Functions as a component of numerous distinct DCX (DDB1-CUL4-X-box) E3 ubiquitin-protein ligase complexes which mediate the ubiquitination and subsequent proteasomal degradation of target proteins. In the DCX complexes, acts as a scaffolding subunit required to stabilize the complex. In Xenopus tropicalis (Western clawed frog), this protein is DET1- and DDB1-associated protein 1.